Consider the following 266-residue polypeptide: UPF0294 protein Ent638_0743 (266 aa).

Belongs to the UPF0294 family.

The protein localises to the cytoplasm. The protein is UPF0294 protein Ent638_0743 of Enterobacter sp. (strain 638).